A 624-amino-acid chain; its full sequence is Coagulation factor XI (624 aa).

An N-terminal signal peptide occupies residues 1–18; the sequence is MTSLHQVLYFIFFASVSS. Apple domains are found at residues 20-103, 110-193, 200-283, and 291-376; these read CVTK…FKQC, CSKD…LKSC, CIRD…LQHC, and CHPS…LRLC. Disulfide bonds link Cys20/Cys103, Cys46/Cys76, Cys50/Cys56, Cys110/Cys193, Cys136/Cys165, Cys140/Cys146, Cys200/Cys283, Cys226/Cys255, Cys230/Cys236, Cys291/Cys376, Cys317/Cys348, Cys321/Cys327, Cys382/Cys499, Cys415/Cys431, Cys513/Cys580, Cys544/Cys559, and Cys570/Cys598. Residues Asn90 and Asn126 are each glycosylated (N-linked (GlcNAc...) asparagine). N-linked (GlcNAc...) asparagine glycosylation is present at Asn297. Positions 390–622 constitute a Peptidase S1 domain; the sequence is VVGGAASVHG…YVDWILEKTQ (233 aa). The active-site Charge relay system is the His430. N-linked (GlcNAc...) asparagine glycosylation is present at Asn449. Residue Asp479 is the Charge relay system of the active site. Asn490 is a glycosylation site (N-linked (GlcNAc...) asparagine). 547-550 is a heparin binding site; it reads RYRR. The Charge relay system role is filled by Ser574.

This sequence belongs to the peptidase S1 family. Plasma kallikrein subfamily. In terms of assembly, homodimer; disulfide-linked. After activation the heavy and light chains are also linked by a disulfide bond. Interacts (activated) with F9 (inactive and activated) in calcium-dependent manner. Forms a heterodimer with SERPINA5. In terms of processing, activated by factor XIIa (or XII), which cleaves each polypeptide after Arg-389 into the light chain, which contains the active site, and the heavy chain, which associates with high molecular weight (HMW) kininogen. Activated by F12 (activated); the presence of negatively charged surfaces accelerates activation. Activated by F2 (thrombin); the presence of negatively charged surfaces, such as polyphosphate and dextran sulfate, strongly accelerates activation. Autoactivated; the presence of negatively charged surfaces, such as polyphosphate and dextran sulfate, accelerates autoactivation and autolysis. Post-translationally, N-glycosylated on both chains. N-glycosylated sites mainly consist of nonfucosylated sialylated biantennary (in high abundance) and/or triantennary (in low abundance) complex structures.

Its subcellular location is the secreted. It catalyses the reaction Selective cleavage of Arg-|-Ala and Arg-|-Val bonds in factor IX to form factor IXa.. Inhibited by SERPINA5. Functionally, factor XI triggers the middle phase of the intrinsic pathway of blood coagulation by activating factor IX. This chain is Coagulation factor XI (F11), found in Mus musculus (Mouse).